Here is a 349-residue protein sequence, read N- to C-terminus: Phosphoribosylformylglycinamidine cyclo-ligase (349 aa).

The protein belongs to the AIR synthase family.

It is found in the cytoplasm. The enzyme catalyses 2-formamido-N(1)-(5-O-phospho-beta-D-ribosyl)acetamidine + ATP = 5-amino-1-(5-phospho-beta-D-ribosyl)imidazole + ADP + phosphate + H(+). Its pathway is purine metabolism; IMP biosynthesis via de novo pathway; 5-amino-1-(5-phospho-D-ribosyl)imidazole from N(2)-formyl-N(1)-(5-phospho-D-ribosyl)glycinamide: step 2/2. The sequence is that of Phosphoribosylformylglycinamidine cyclo-ligase from Lactobacillus delbrueckii subsp. bulgaricus (strain ATCC BAA-365 / Lb-18).